The primary structure comprises 1568 residues: Kielin/chordin-like protein (1568 aa).

The signal sequence occupies residues 1–23 (MAGVGAAALSLLLHLGALALAAG). The interval 27–49 (GAVPREPPGQQTTAHSSVLAGNS) is disordered. Positions 35–49 (GQQTTAHSSVLAGNS) are enriched in polar residues. Residues 60 to 87 (LGRLEAAVMELREQNKDLQTRVRQLESC) adopt a coiled-coil conformation. VWFC domains lie at 136-193 (RGCS…PICR), 194-253 (PGCD…PTCQ), 253-312 (QGCT…PVCD), 312-370 (DGCF…PVCD), 426-485 (PACE…PSCD), 485-544 (DSCT…PRCP), 544-602 (PDCI…NDCS), 602-661 (SGCA…PQCP), 667-725 (AGCP…PSCD), 725-782 (DGCL…PDCD), 782-841 (DGCE…PTCQ), 900-959 (HSCL…PRCR), 959-1017 (RGCL…PQCS), 1017-1085 (SDCE…PTCA), 1082-1145 (PTCA…PVCR), and 1149-1209 (QSCV…PRCL). Asn340 carries N-linked (GlcNAc...) asparagine glycosylation. The N-linked (GlcNAc...) asparagine glycan is linked to Asn499. Residue Asn1090 is glycosylated (N-linked (GlcNAc...) asparagine). Residues 1213–1389 (ASCMAFGDPH…EGLWPGRPCS (177 aa)) form the VWFD domain. 2 disulfides stabilise this stretch: Cys1215/Cys1347 and Cys1237/Cys1388. Positions 1483-1543 (CPLERGFVFD…EAHCIPPEAC (61 aa)) constitute a TIL domain.

Interacts with BMP7 and, by doing so, enhances binding to the type I receptors that contains cytoplasmic serine/threonine protein kinase domains. Also able to interact with activin-A and TGFB1.

It localises to the secreted. Enhances bone morphogenetic protein (BMP) signaling in a paracrine manner. In contrast, it inhibits both the activin-A and TGFB1-mediated signaling pathways. The protein is Kielin/chordin-like protein of Homo sapiens (Human).